The sequence spans 417 residues: Gamma-glutamyl phosphate reductase (417 aa).

Belongs to the gamma-glutamyl phosphate reductase family.

It localises to the cytoplasm. The catalysed reaction is L-glutamate 5-semialdehyde + phosphate + NADP(+) = L-glutamyl 5-phosphate + NADPH + H(+). It functions in the pathway amino-acid biosynthesis; L-proline biosynthesis; L-glutamate 5-semialdehyde from L-glutamate: step 2/2. Functionally, catalyzes the NADPH-dependent reduction of L-glutamate 5-phosphate into L-glutamate 5-semialdehyde and phosphate. The product spontaneously undergoes cyclization to form 1-pyrroline-5-carboxylate. The chain is Gamma-glutamyl phosphate reductase from Hydrogenovibrio crunogenus (strain DSM 25203 / XCL-2) (Thiomicrospira crunogena).